Here is a 406-residue protein sequence, read N- to C-terminus: Corticosteroid-binding globulin (406 aa).

An N-terminal signal peptide occupies residues 1 to 22 (MLLTLYACLLWLSTSGLWTSQA). Residues Asn95, Asn119, and Asn223 are each glycosylated (N-linked (GlcNAc...) asparagine). Gln253 contributes to the cortisol binding site. N-linked (GlcNAc...) asparagine glycosylation is present at Asn259. Cortisol is bound by residues Gln285 and Trp394.

Belongs to the serpin family.

It is found in the secreted. Functionally, major transport protein for glucocorticoids and progestins in the blood of almost all vertebrate species. This is Corticosteroid-binding globulin (Serpina6) from Sus scrofa (Pig).